The chain runs to 329 residues: 4-hydroxythreonine-4-phosphate dehydrogenase (329 aa).

Substrate is bound by residues H136 and T137. A divalent metal cation is bound by residues H166, H211, and H266. Substrate-binding residues include K274, N283, and R292.

Belongs to the PdxA family. Homodimer. It depends on Zn(2+) as a cofactor. The cofactor is Mg(2+). Requires Co(2+) as cofactor.

Its subcellular location is the cytoplasm. It catalyses the reaction 4-(phosphooxy)-L-threonine + NAD(+) = 3-amino-2-oxopropyl phosphate + CO2 + NADH. It participates in cofactor biosynthesis; pyridoxine 5'-phosphate biosynthesis; pyridoxine 5'-phosphate from D-erythrose 4-phosphate: step 4/5. Functionally, catalyzes the NAD(P)-dependent oxidation of 4-(phosphooxy)-L-threonine (HTP) into 2-amino-3-oxo-4-(phosphooxy)butyric acid which spontaneously decarboxylates to form 3-amino-2-oxopropyl phosphate (AHAP). This Salmonella typhi protein is 4-hydroxythreonine-4-phosphate dehydrogenase.